Here is a 344-residue protein sequence, read N- to C-terminus: N-acetyl-gamma-glutamyl-phosphate reductase (344 aa).

Residue Cys150 is part of the active site.

It belongs to the NAGSA dehydrogenase family. Type 1 subfamily.

It localises to the cytoplasm. The enzyme catalyses N-acetyl-L-glutamate 5-semialdehyde + phosphate + NADP(+) = N-acetyl-L-glutamyl 5-phosphate + NADPH + H(+). It participates in amino-acid biosynthesis; L-arginine biosynthesis; N(2)-acetyl-L-ornithine from L-glutamate: step 3/4. Catalyzes the NADPH-dependent reduction of N-acetyl-5-glutamyl phosphate to yield N-acetyl-L-glutamate 5-semialdehyde. The sequence is that of N-acetyl-gamma-glutamyl-phosphate reductase from Pseudomonas putida (strain ATCC 700007 / DSM 6899 / JCM 31910 / BCRC 17059 / LMG 24140 / F1).